We begin with the raw amino-acid sequence, 361 residues long: D-alanine--D-alanine ligase (361 aa).

The ATP-grasp domain occupies 140–345 (KHLFAQAGLD…YAELIEKLVA (206 aa)). 173 to 228 (EGELGYPCFVKPANLGSSVGISKCRSREELDQAFELAFQYDRKIVVEEGVIGREIE) is an ATP binding site. Positions 299, 312, and 314 each coordinate Mg(2+).

This sequence belongs to the D-alanine--D-alanine ligase family. Requires Mg(2+) as cofactor. It depends on Mn(2+) as a cofactor.

It localises to the cytoplasm. The enzyme catalyses 2 D-alanine + ATP = D-alanyl-D-alanine + ADP + phosphate + H(+). It participates in cell wall biogenesis; peptidoglycan biosynthesis. Cell wall formation. This Bacillus licheniformis (strain ATCC 14580 / DSM 13 / JCM 2505 / CCUG 7422 / NBRC 12200 / NCIMB 9375 / NCTC 10341 / NRRL NRS-1264 / Gibson 46) protein is D-alanine--D-alanine ligase.